The primary structure comprises 31 residues: U13-ctenitoxin-Pn1b (31 aa).

Disulfide bonds link Cys3–Cys17, Cys10–Cys21, and Cys16–Cys30.

In terms of tissue distribution, expressed by the venom gland.

The protein localises to the secreted. In terms of biological role, acts as a neurotoxin. In Phoneutria nigriventer (Brazilian armed spider), this protein is U13-ctenitoxin-Pn1b.